The primary structure comprises 456 residues: Aromatic amino acid transport protein AroP (456 aa).

Residues 1-18 (MEGQQHGEQLKRGLKNRH) are Cytoplasmic-facing. Residues 19-39 (IQLIALGGAIGTGLFLGSASV) traverse the membrane as a helical segment. The Periplasmic portion of the chain corresponds to 40-41 (IQ). A helical transmembrane segment spans residues 42–62 (SAGPGIILGYAIAGFIAFLIM). The Cytoplasmic segment spans residues 63-85 (RQLGEMVVEEPVAGSFSHFAYKY). A helical transmembrane segment spans residues 86-106 (WGSFAGFASGWNYWVLYVLVA). Topologically, residues 107–116 (MAELTAVGKY) are periplasmic. Residues 117–137 (IQFWYPEIPTWVSAAVFFVVI) traverse the membrane as a helical segment. Over 138-154 (NAINLTNVKVFGEMEFW) the chain is Cytoplasmic. A helical transmembrane segment spans residues 155 to 175 (FAIIKVIAVVAMIIFGAWLLF). The Periplasmic portion of the chain corresponds to 176 to 200 (SGNGGPQASVSNLWDQGGFLPHGFT). Residues 201–221 (GLVMMMAIIMFSFGGLELVGI) form a helical membrane-spanning segment. Residues 222–239 (TAAEADNPEQSIPKATNQ) are Cytoplasmic-facing. The chain crosses the membrane as a helical span at residues 240-260 (VIYRILIFYIGSLAVLLSLMP). Residues 261–270 (WTRVTADTSP) are Periplasmic-facing. Residues 271–291 (FVLIFHELGDTFVANALNIVV) traverse the membrane as a helical segment. Residues 292-332 (LTAALSVYNSCVYCNSRMLFGLAQQGNAPKALASVDKRGVP) lie on the Cytoplasmic side of the membrane. A helical transmembrane segment spans residues 333–353 (VNTILVSALVTALCVLINYLA). At 354–357 (PESA) the chain is on the periplasmic side. The chain crosses the membrane as a helical span at residues 358–378 (FGLLMALVVSALVINWAMISL). Residues 379-398 (AHMKFRRAKQEQGVVTRFPA) lie on the Cytoplasmic side of the membrane. The chain crosses the membrane as a helical span at residues 399-419 (LLYPLGNWICLLFMAAVLVIM). The Periplasmic segment spans residues 420–424 (LMTPG). The helical transmembrane segment at 425 to 445 (MAISVYLIPVWLIVLGIGYLF) threads the bilayer. Residues 446–456 (KEKTAKAVKAH) are Cytoplasmic-facing.

It belongs to the amino acid-polyamine-organocation (APC) superfamily. Amino acid transporter (AAT) (TC 2.A.3.1) family.

Its subcellular location is the cell inner membrane. The enzyme catalyses L-phenylalanine(in) + H(+)(in) = L-phenylalanine(out) + H(+)(out). The catalysed reaction is L-tryptophan(in) + H(+)(in) = L-tryptophan(out) + H(+)(out). It catalyses the reaction L-tyrosine(in) + H(+)(in) = L-tyrosine(out) + H(+)(out). Its function is as follows. Permease that is involved in the active transport across the cytoplasmic membrane of all three aromatic amino acids, phenylalanine, tyrosine and tryptophan. This chain is Aromatic amino acid transport protein AroP (aroP), found in Escherichia coli O6:H1 (strain CFT073 / ATCC 700928 / UPEC).